Here is a 300-residue protein sequence, read N- to C-terminus: MSSRAGIAEGYEQIEVDVVAVWKEGYVYENRGSTSVEQKIKITKGMRNLNSETKTLTASHSIGSTISTGDLFEIATVDVSYSYSHEESQVSMTETEVYESKEIEHTITIPPTSKFTRWQLNADVGGADIEYMYLIDEVTPIGGTLSIPQVIKSRAKILVGREIYLGETEIRIKHADRKEYMTVVSRKSWPAATLGHSKLYKFVLYEDMYGFRIKTLNTMYSGYEYAYSSDQGGIYFDQGSDNPKQRWAINKSLPLRHGDVVTFMNKYFTRSGLCYYDGPATDVYCLDKREDKWILEVVKP.

An N-terminal cap domain region spans residues 12–35; the sequence is EQIEVDVVAVWKEGYVYENRGSTS. The beta-hairpin domain stretch occupies residues 36-109; the sequence is VEQKIKITKG…SKEIEHTITI (74 aa). The N-terminal cap domain stretch occupies residues 110 to 158; sequence PPTSKFTRWQLNADVGGADIEYMYLIDEVTPIGGTLSIPQVIKSRAKIL. Residues 159–299 form a C-terminal receptor-binding domain region; the sequence is VGREIYLGET…EDKWILEVVK (141 aa). An N-(acyl)-sphingosylphosphocholine is bound by residues K187, S229, Y235, and Y284. C274 and C285 form a disulfide bridge.

Belongs to the lysenin family. In terms of assembly, binds to sphingomyelin as a monomer by using its C-terminal domain. Forms a nonamer when sphingomyelin/LRP-2 ratio is lower than ca 500. Oligomerization, but not binding, is influenced by the fluidity of sphingomyelin. Expressed by coelomocytes.

It localises to the secreted. The protein localises to the target cell membrane. Functionally, pore-forming toxin that specifically binds sphingomyelin in the plasma membrane of various cells. Has hemolytic activity. It also has antibacterial activities against B.megaterium. This Eisenia fetida (Red wiggler worm) protein is Lysenin-related protein 2.